We begin with the raw amino-acid sequence, 147 residues long: Globin, major polymeric component P1 (147 aa).

Residues 2–146 (HLTADQVAAL…ISDACIAGLQ (145 aa)) enclose the Globin domain. His96 contributes to the heme b binding site.

The protein belongs to the globin family. In terms of assembly, polymer.

This Glycera dibranchiata (Bloodworm) protein is Globin, major polymeric component P1.